The following is a 627-amino-acid chain: 1-deoxy-D-xylulose-5-phosphate synthase (627 aa).

Thiamine diphosphate is bound by residues His-80 and 121-123; that span reads GHS. Residue Asp-152 participates in Mg(2+) binding. Thiamine diphosphate contacts are provided by residues 153 to 154, Asn-181, Tyr-288, and Glu-370; that span reads GA. Mg(2+) is bound at residue Asn-181.

The protein belongs to the transketolase family. DXPS subfamily. Homodimer. The cofactor is Mg(2+). It depends on thiamine diphosphate as a cofactor.

It carries out the reaction D-glyceraldehyde 3-phosphate + pyruvate + H(+) = 1-deoxy-D-xylulose 5-phosphate + CO2. It participates in metabolic intermediate biosynthesis; 1-deoxy-D-xylulose 5-phosphate biosynthesis; 1-deoxy-D-xylulose 5-phosphate from D-glyceraldehyde 3-phosphate and pyruvate: step 1/1. Its function is as follows. Catalyzes the acyloin condensation reaction between C atoms 2 and 3 of pyruvate and glyceraldehyde 3-phosphate to yield 1-deoxy-D-xylulose-5-phosphate (DXP). The chain is 1-deoxy-D-xylulose-5-phosphate synthase from Aliivibrio fischeri (strain MJ11) (Vibrio fischeri).